A 379-amino-acid chain; its full sequence is Succinyl-diaminopimelate desuccinylase (379 aa).

H70 contacts Zn(2+). D72 is an active-site residue. A Zn(2+)-binding site is contributed by D103. The active-site Proton acceptor is E137. Residues E138, E166, and H352 each coordinate Zn(2+).

Belongs to the peptidase M20A family. DapE subfamily. In terms of assembly, homodimer. Zn(2+) serves as cofactor. Co(2+) is required as a cofactor.

It catalyses the reaction N-succinyl-(2S,6S)-2,6-diaminopimelate + H2O = (2S,6S)-2,6-diaminopimelate + succinate. The protein operates within amino-acid biosynthesis; L-lysine biosynthesis via DAP pathway; LL-2,6-diaminopimelate from (S)-tetrahydrodipicolinate (succinylase route): step 3/3. Its function is as follows. Catalyzes the hydrolysis of N-succinyl-L,L-diaminopimelic acid (SDAP), forming succinate and LL-2,6-diaminopimelate (DAP), an intermediate involved in the bacterial biosynthesis of lysine and meso-diaminopimelic acid, an essential component of bacterial cell walls. The polypeptide is Succinyl-diaminopimelate desuccinylase (Shewanella sp. (strain W3-18-1)).